The chain runs to 285 residues: Polyamine aminopropyltransferase (285 aa).

The PABS domain occupies 2 to 237 (QMWFSQYHTV…GYWLFGFASK (236 aa)). S-methyl-5'-thioadenosine is bound at residue Q31. D86 contacts spermidine. S-methyl-5'-thioadenosine-binding positions include E106 and 137–138 (DG). D155 acts as the Proton acceptor in catalysis. 155-158 (DSTD) provides a ligand contact to spermidine.

The protein belongs to the spermidine/spermine synthase family. Homodimer or homotetramer.

It localises to the cytoplasm. It carries out the reaction S-adenosyl 3-(methylsulfanyl)propylamine + putrescine = S-methyl-5'-thioadenosine + spermidine + H(+). It functions in the pathway amine and polyamine biosynthesis; spermidine biosynthesis; spermidine from putrescine: step 1/1. Catalyzes the irreversible transfer of a propylamine group from the amino donor S-adenosylmethioninamine (decarboxy-AdoMet) to putrescine (1,4-diaminobutane) to yield spermidine. In Agathobacter rectalis (strain ATCC 33656 / DSM 3377 / JCM 17463 / KCTC 5835 / VPI 0990) (Eubacterium rectale), this protein is Polyamine aminopropyltransferase.